Reading from the N-terminus, the 362-residue chain is Protein RecA (362 aa).

77–84 (GPESSGKT) lines the ATP pocket.

The protein belongs to the RecA family.

The protein resides in the cytoplasm. Functionally, can catalyze the hydrolysis of ATP in the presence of single-stranded DNA, the ATP-dependent uptake of single-stranded DNA by duplex DNA, and the ATP-dependent hybridization of homologous single-stranded DNAs. It interacts with LexA causing its activation and leading to its autocatalytic cleavage. The polypeptide is Protein RecA (Rhizobium etli (strain ATCC 51251 / DSM 11541 / JCM 21823 / NBRC 15573 / CFN 42)).